Here is a 1704-residue protein sequence, read N- to C-terminus: Vitellogenin-1 (1704 aa).

A signal peptide spans 1–14; sequence MKAVVLALTLAFVA. The region spanning 22–660 is the Vitellogenin domain; the sequence is FAAGKTYVYK…DAATFMPKSF (639 aa). N-linked (GlcNAc...) asparagine glycans are attached at residues Asn446, Asn635, Asn903, Asn908, Asn1019, Asn1054, Asn1080, Asn1121, Asn1174, Asn1285, Asn1322, Asn1375, Asn1379, Asn1405, Asn1456, and Asn1512. Low complexity predominate over residues 1078–1109; sequence RRNSSSSSSSSSSSSSESRSSRSSSSSSSSSR. The interval 1078–1213 is disordered; the sequence is RRNSSSSSSS…SSDRRSKEVM (136 aa). Residues 1122-1204 show a composition bias toward low complexity; that stretch reads SSSSSSSRRS…FSDSSSSSSS (83 aa). The 176-residue stretch at 1442 to 1617 folds into the VWFD domain; sequence AECSFVEDTL…SWILPAESCR (176 aa). Cystine bridges form between Cys1444–Cys1580 and Cys1467–Cys1616.

Post-translationally, phosvitin, an egg yolk storage protein, is one of the most highly phosphorylated (10%) proteins in nature. In terms of processing, the N-terminal of the blood vitellogenin is blocked. As to expression, produced by the liver, secreted into the blood and then sequestered by receptor mediated endocytosis into growing oocytes, where it is generally cleaved, giving rise to the respective yolk components composed of complex suite of small cleavage products.

In terms of biological role, precursor of the major egg-yolk proteins that are sources of nutrients during early development of oviparous organisms. This Fundulus heteroclitus (Killifish) protein is Vitellogenin-1 (vtg1).